Here is a 271-residue protein sequence, read N- to C-terminus: MNSYSSAAPGKRLEGKVAIITGGASGIGATAVQIFHDNGAKVVISDVQDKLGQALADKLGEGVSYIHCDISNENDVINLVDTTVAKYGKLDIMYNNAGVIDRNFGSILDTPKSDLERLLSVNTIGGFLGAKHAARVMVPKQKGCILFTASACTEIAGLGSPAYTVSKYGVVALVKSLAAELGQYGIRVNCVSPYGLATGMSTAGVDPALIESSLSEMGNLKGQVLKTDGIANAALYLACDEASYVSGQNLVVDGGFSILNPTIMKAYNLIN.

The active-site Proton donor is the Ser-150. The Proton acceptor role is filled by Tyr-163. Lys-167 functions as the Proton donor/acceptor in the catalytic mechanism.

It belongs to the short-chain dehydrogenases/reductases (SDR) family. In terms of tissue distribution, mainly expressed in petioles.

It catalyses the reaction 21-O-acetyl-isomeliandiol + A = (21S)-21-acetoxyl-apo-melianone + AH2. It participates in secondary metabolite biosynthesis; terpenoid biosynthesis. In terms of biological role, oxidoreductase involved in the biosynthesis of limonoids triterpene natural products such as azadirachtin, an antifeedant widely used as bioinsecticide, and possessing many medicinal applications including anti-tumoral, anti-malarial, anti-rheumatic, antibacterial, anti-inflammatory, anti-pyretic and diuretic effects. Catalyzes the oxidation of 21-O-acetyl-isomeliandiol to (21S)-21-acetoxyl-apo-melianone. The polypeptide is (21S)-21-acetoxyl-apo-melianone synthase SDR (Melia azedarach (Chinaberry tree)).